The primary structure comprises 250 residues: Probable transcriptional regulatory protein Cpha266_0538 (250 aa).

The protein belongs to the TACO1 family.

The protein resides in the cytoplasm. This chain is Probable transcriptional regulatory protein Cpha266_0538, found in Chlorobium phaeobacteroides (strain DSM 266 / SMG 266 / 2430).